The following is a 333-amino-acid chain: MLVLGIESSCDETGVAVYDSESGLLSHALHSQIATHRVHGGVVPELASRDHVNYLVPLVDEVLTKAKIRKNQLDGIAYTAGPGLIGALLVGSCFAKSLAYALNIPALAIHHLEAHLLAAKMETPSLDFPFIALLVSGGHCQLIEVNNIGEYRLLGDTLDDAVGEAFDKTAKLMGIPYPGGAVLANLADQCLSTPYQFPRPMTDRPGLDFSFSGLKTHALNTWNQSAKKQGDRSEIAKAFQQAVVETLIIKCKRAIKESQSKRLVVAGGVGANKALRSALQKWINDIKGEVYFPALEYCTDNGAMVAYAGCLRMMRGESDGGLGVMVKPRWPLA.

Positions 111 and 115 each coordinate Fe cation. Substrate-binding positions include 134–138, Asp-167, Gly-180, and Asn-272; that span reads LVSGG. Fe cation is bound at residue Asp-300.

This sequence belongs to the KAE1 / TsaD family. Requires Fe(2+) as cofactor.

It is found in the cytoplasm. The enzyme catalyses L-threonylcarbamoyladenylate + adenosine(37) in tRNA = N(6)-L-threonylcarbamoyladenosine(37) in tRNA + AMP + H(+). Functionally, required for the formation of a threonylcarbamoyl group on adenosine at position 37 (t(6)A37) in tRNAs that read codons beginning with adenine. Is involved in the transfer of the threonylcarbamoyl moiety of threonylcarbamoyl-AMP (TC-AMP) to the N6 group of A37, together with TsaE and TsaB. TsaD likely plays a direct catalytic role in this reaction. In Legionella pneumophila (strain Lens), this protein is tRNA N6-adenosine threonylcarbamoyltransferase.